The chain runs to 345 residues: Twinfilin (345 aa).

2 ADF-H domains span residues 4-139 (QTGI…KHKR) and 177-312 (GISC…DELH). The segment at 320–345 (PAFAKPKGPPNRGAKRLTRPSNEDQV) is disordered.

This sequence belongs to the actin-binding proteins ADF family. Twinfilin subfamily. As to quaternary structure, interacts with G-actin; ADP-actin form.

It is found in the cytoplasm. The protein resides in the cytoskeleton. Its subcellular location is the cell cortex. Actin-binding protein involved in motile and morphological processes. Inhibits actin polymerization, likely by sequestering G-actin. The sequence is that of Twinfilin (twf) from Drosophila pseudoobscura pseudoobscura (Fruit fly).